The sequence spans 439 residues: Diaminopimelate decarboxylase (439 aa).

An N6-(pyridoxal phosphate)lysine modification is found at lysine 66. Pyridoxal 5'-phosphate contacts are provided by residues glycine 248 and 290–293; that span reads EPGR. Substrate contacts are provided by arginine 293, arginine 330, and tyrosine 334. Catalysis depends on cysteine 361, which acts as the Proton donor. 2 residues coordinate substrate: glutamate 362 and tyrosine 390. Residue tyrosine 390 participates in pyridoxal 5'-phosphate binding.

Belongs to the Orn/Lys/Arg decarboxylase class-II family. LysA subfamily. In terms of assembly, homodimer. Pyridoxal 5'-phosphate serves as cofactor.

The catalysed reaction is meso-2,6-diaminopimelate + H(+) = L-lysine + CO2. Its pathway is amino-acid biosynthesis; L-lysine biosynthesis via DAP pathway; L-lysine from DL-2,6-diaminopimelate: step 1/1. Specifically catalyzes the decarboxylation of meso-diaminopimelate (meso-DAP) to L-lysine. The protein is Diaminopimelate decarboxylase of Bacillus subtilis (strain 168).